Here is an 876-residue protein sequence, read N- to C-terminus: Phosphoenolpyruvate carboxylase (876 aa).

Catalysis depends on residues H138 and K543.

Belongs to the PEPCase type 1 family. It depends on Mg(2+) as a cofactor.

The catalysed reaction is oxaloacetate + phosphate = phosphoenolpyruvate + hydrogencarbonate. Its function is as follows. Forms oxaloacetate, a four-carbon dicarboxylic acid source for the tricarboxylic acid cycle. The polypeptide is Phosphoenolpyruvate carboxylase (Vibrio atlanticus (strain LGP32) (Vibrio splendidus (strain Mel32))).